The following is a 319-amino-acid chain: MSGEDYEKRLQAWVGRTLGEPRRGQDPVNVPMIRHWVEAMGDTNPVYLDEEAARATGRETVVAPASMMQAWTMRGYAATVNPEPEAGGMEELTALLAEGGYTSVVATDSEFEFHRELVPGDHISVQEQVESISPEKKTALGEGRFITTLRTYRDQRGEVVATQRWRLLRFRPKKTEQTEQKPKALRPRPAINRDNAFWFEAAKQRRLVIQRCAACKTLRHPPGPCCPHCGSFDWDTVEAAGTGQVYSYIVAHHPPHPAFEMPYVVALVELTEGTRLVTNLVGIAPDKIEIGMPVVLDWLEADPELTLPVFRPAVPQEES.

Positions 199–298 (FEAAKQRRLV…EIGMPVVLDW (100 aa)) are DUF35.

The protein belongs to the thioester dehydratase family. In terms of assembly, heterodimer composed of ChsH1 and ChsH2. Two heterodimers combine to form a heterotetramer. The complex interacts with Ltp2 via the DUF35 C-terminal region of ChsH2.

In terms of biological role, probably involved in bile acid degradation. The sequence is that of Probable enoyl-CoA hydratase alpha subunit from Thermomonospora curvata (strain ATCC 19995 / DSM 43183 / JCM 3096 / KCTC 9072 / NBRC 15933 / NCIMB 10081 / Henssen B9).